The sequence spans 362 residues: Glutaminase-asparaginase (362 aa).

The N-terminal stretch at 1–25 (MNAALKTFAPSALALLLILPSSASA) is a signal peptide. Residues 35–362 (ANVVILATGG…KELQRIFWEY (328 aa)) enclose the Asparaginase/glutaminase domain. The active-site Acyl-ester intermediate is Thr-45. Residues Ser-92 and 125–126 (TD) each bind substrate.

It belongs to the asparaginase 1 family. In terms of assembly, homotetramer.

The protein resides in the periplasm. It carries out the reaction L-glutamine + H2O = L-glutamate + NH4(+). The enzyme catalyses L-asparagine + H2O = L-aspartate + NH4(+). The polypeptide is Glutaminase-asparaginase (ansB) (Pseudomonas putida (strain ATCC 47054 / DSM 6125 / CFBP 8728 / NCIMB 11950 / KT2440)).